We begin with the raw amino-acid sequence, 245 residues long: tRNA1(Val) (adenine(37)-N6)-methyltransferase (245 aa).

It belongs to the methyltransferase superfamily. tRNA (adenine-N(6)-)-methyltransferase family.

It localises to the cytoplasm. The catalysed reaction is adenosine(37) in tRNA1(Val) + S-adenosyl-L-methionine = N(6)-methyladenosine(37) in tRNA1(Val) + S-adenosyl-L-homocysteine + H(+). Its function is as follows. Specifically methylates the adenine in position 37 of tRNA(1)(Val) (anticodon cmo5UAC). This is tRNA1(Val) (adenine(37)-N6)-methyltransferase from Shigella boydii serotype 18 (strain CDC 3083-94 / BS512).